The chain runs to 123 residues: U9-barytoxin-Tl1a (123 aa).

A signal peptide spans 1-18; the sequence is MNTMITFLVLFVLTAANG. A propeptide spanning residues 19–77 is cleaved from the precursor; that stretch reads APEANERKIPEAIHNEDQSLAEMAEELMFFLQQTEFEAPLLQEEEEAEXAEXRNSRERR. Cystine bridges form between cysteine 78/cysteine 93, cysteine 85/cysteine 98, and cysteine 92/cysteine 112.

Belongs to the neurotoxin 14 (magi-1) family. 05 (ICK-7) subfamily. ICK-7 sub-subfamily. As to expression, expressed by the venom gland.

The protein resides in the secreted. Its function is as follows. Ion channel inhibitor. The chain is U9-barytoxin-Tl1a from Trittame loki (Brush-footed trapdoor spider).